Reading from the N-terminus, the 403-residue chain is MHAWPAPKIPSLPGRNRLPSLFDTASRRLVTVGSQQGASMYVCGITPYDATHLGHAATYVAFDLLVRTWHDAGVTVRYAQNVTDVDDPLLERARQVDQPWEAIAARETAKFRADMAALRVVPPDRYVGVVESLPQIIGLIEVLRSRGLTYELDGDQYFATHAIPDFGAVSHLGRDDMIALFAARGGDPDRAGKKDPLDALLWRGKRPEEPSWPAPFGRGRPGWHVECAAIALTHLPLPLDVQGGGADLVFPHHDMTAAQAEAATGRRFARAYVHTGLVAYQGEKMSKSLGNLVFVSDLCAAGADPMAVRLALLDHHYRTEWEWTPRLLDEATDRLAEWRAAVRRPRGAPGDGLLAAVRDRLADDLDAPGAIALIDEWTTQDGDDPDAPTLVAAMADALLGVHL.

Zn(2+) is bound at residue Cys43. L-cysteinyl-5'-AMP contacts are provided by residues Cys43–Thr46, Thr58, Asn81–Thr83, and Trp223. Residues Ile45–His55 carry the 'HIGH' region motif. Cys227 is a Zn(2+) binding site. L-cysteinyl-5'-AMP is bound at residue Gly245–Asp247. Residue His252 coordinates Zn(2+). Val278 is an L-cysteinyl-5'-AMP binding site. The 'KMSKS' region signature appears at Lys284–Ser288.

The protein belongs to the class-I aminoacyl-tRNA synthetase family. MshC subfamily. Monomer. Zn(2+) is required as a cofactor.

The enzyme catalyses 1D-myo-inositol 2-amino-2-deoxy-alpha-D-glucopyranoside + L-cysteine + ATP = 1D-myo-inositol 2-(L-cysteinylamino)-2-deoxy-alpha-D-glucopyranoside + AMP + diphosphate + H(+). Its function is as follows. Catalyzes the ATP-dependent condensation of GlcN-Ins and L-cysteine to form L-Cys-GlcN-Ins. This chain is L-cysteine:1D-myo-inositol 2-amino-2-deoxy-alpha-D-glucopyranoside ligase, found in Acidothermus cellulolyticus (strain ATCC 43068 / DSM 8971 / 11B).